The following is a 250-amino-acid chain: Endonuclease NucS 2 (250 aa).

The protein belongs to the NucS endonuclease family.

The protein resides in the cytoplasm. Its function is as follows. Cleaves both 3' and 5' ssDNA extremities of branched DNA structures. The sequence is that of Endonuclease NucS 2 from Halobacterium salinarum (strain ATCC 700922 / JCM 11081 / NRC-1) (Halobacterium halobium).